Reading from the N-terminus, the 467-residue chain is MLGFLDYIQLAFSDASKWNRDNSYSQLTTTANALLDFSTPERLKVNLSSLSTPHFATTYTLGTVGLIDGSISYLFTTVPLRDTPSRSTLIPLRKLVPGYRQISAPSLPPELPTVDGRDGDLAIGETQGILKKKPTLLHATLHLPPPTTLTGLFLRRLSPTTQLSLAFCSSRASTPKSAPQAALVTQILHDTGKYSSEFLFSTDNALFGFKGLWNFGPDPRKQNQQGDLARDSRRSLLSLLSAGAEAYYSPVSSVVGLSTGLRFTTLPAATESPHFTFPYTLTLTLTPLTGSMSTTYSLLASPNVSFSSRFGFNVYSWESEMVAGCELWRRSSNNRLHDDKSQRDSALFGVDDLTWARRKMGLPDTAPSRNRECDDLPPPRYDNYYHQRSPHASDSVIKVRVDQSWNIRALWEGRVKELLVSAGVALGPTPRSSLSYASSSAVGGVGAAGGLSSYGWKSVGVSVLYSS.

This sequence belongs to the MDM10 family. In terms of assembly, component of the ER-mitochondria encounter structure (ERMES) or MDM complex, composed of MMM1, MDM10, MDM12 and MDM34. Associates with the mitochondrial outer membrane sorting assembly machinery SAM(core) complex.

It localises to the mitochondrion outer membrane. Component of the ERMES/MDM complex, which serves as a molecular tether to connect the endoplasmic reticulum and mitochondria. Components of this complex are involved in the control of mitochondrial shape and protein biogenesis and may function in phospholipid exchange. MDM10 is involved in the late assembly steps of the general translocase of the mitochondrial outer membrane (TOM complex). Functions in the TOM40-specific route of the assembly of outer membrane beta-barrel proteins, including the association of TOM40 with the receptor TOM22 and small TOM proteins. Can associate with the SAM(core) complex as well as the MDM12-MMM1 complex, both involved in late steps of the major beta-barrel assembly pathway, that is responsible for biogenesis of all outer membrane beta-barrel proteins. May act as a switch that shuttles between both complexes and channels precursor proteins into the TOM40-specific pathway. Plays a role in mitochondrial morphology and in the inheritance of mitochondria. In Ajellomyces capsulatus (strain G186AR / H82 / ATCC MYA-2454 / RMSCC 2432) (Darling's disease fungus), this protein is Mitochondrial distribution and morphology protein 10.